Consider the following 139-residue polypeptide: ATP synthase epsilon chain (139 aa).

This sequence belongs to the ATPase epsilon chain family. F-type ATPases have 2 components, CF(1) - the catalytic core - and CF(0) - the membrane proton channel. CF(1) has five subunits: alpha(3), beta(3), gamma(1), delta(1), epsilon(1). CF(0) has three main subunits: a, b and c.

The protein localises to the cell inner membrane. Its function is as follows. Produces ATP from ADP in the presence of a proton gradient across the membrane. This chain is ATP synthase epsilon chain, found in Pseudomonas putida (strain GB-1).